The primary structure comprises 1193 residues: Falcilysin (1193 aa).

H129 contacts Zn(2+). The Proton acceptor role is filled by E132. Zn(2+)-binding residues include H133 and E243. Positions 376 to 404 (DKTNNHNNNHSNNQSSENNGYSNGSHSSD) are disordered. Positions 380–394 (NHNNNHSNNQSSENN) are enriched in low complexity. Residues 395–404 (GYSNGSHSSD) are compositionally biased toward polar residues. Positions 583-619 (LLEGDENYAQEQENLEKQELKKRIENFNEQEKEQVIK) form a coiled coil.

The protein belongs to the peptidase M16 family. In terms of assembly, monomer. Component of the hemozoin formation complex (HFC) composed of falcipains FP2A and/or FP2B, plasmepsins PMII, PMIII/HAP and PMIV, heme detoxifying protein HDP and falcilysin FLN. The HFC complex is involved in hemoglobin degradation and detoxification of heme in the food vacuole during the asexual blood stage. Zn(2+) is required as a cofactor. In terms of processing, does not require processing for targeting to the food vacuole or maturation.

The protein localises to the vacuole membrane. Its subcellular location is the plastid. It is found in the apicoplast. The protein resides in the vesicle. Functionally, in the food vacuole, acts downstream of proteases plasmepsins PMI and PMII and falcipains during the catabolism of host hemoglobin by cleaving peptide fragments of alpha and beta hemoglobin subunits generated by PMI and PMII and falcipains. In the apicoplast, degrades apicoplast transit peptides after their cleavage. Prefers bulky hydrophobic amino acids in the P1' position at both acidic and neutral pH. At P2', prefers hydrophobic residues at acidic pH; at neutral pH, these same residues are abundant but prefers Arg. At P3', prefers hydrophobic residues, especially Met, at both pH conditions. At P4' and P5', prefers acidic residues at acidic pH, however, at neutral pH, the enzyme is less selective at these positions. The optimal site cleavage at acidic pH is YNEHS-|-FFMEE and, at neutral pH, MKRHS-|-FRMRG. The chain is Falcilysin from Plasmodium falciparum (isolate 3D7).